The chain runs to 258 residues: Aspartate/glutamate leucyltransferase (258 aa).

This sequence belongs to the R-transferase family. Bpt subfamily.

The protein localises to the cytoplasm. It carries out the reaction N-terminal L-glutamyl-[protein] + L-leucyl-tRNA(Leu) = N-terminal L-leucyl-L-glutamyl-[protein] + tRNA(Leu) + H(+). The enzyme catalyses N-terminal L-aspartyl-[protein] + L-leucyl-tRNA(Leu) = N-terminal L-leucyl-L-aspartyl-[protein] + tRNA(Leu) + H(+). Functionally, functions in the N-end rule pathway of protein degradation where it conjugates Leu from its aminoacyl-tRNA to the N-termini of proteins containing an N-terminal aspartate or glutamate. The sequence is that of Aspartate/glutamate leucyltransferase from Rhizobium leguminosarum bv. trifolii (strain WSM2304).